The chain runs to 308 residues: Snake venom metalloprotease inhibitor 02D01 (308 aa).

The N-terminal stretch at 1–23 (MFVSRLAASGLLLLSLLALSLDG) is a signal peptide. Residues 24-38 (KPLPQRQPHHIQPME) constitute a propeptide that is removed on maturation. The residue at position 39 (Q39) is a Pyrrolidone carboxylic acid. The propeptide occupies 42-50 (LAPDAPPLE). Q51 bears the Pyrrolidone carboxylic acid mark. The propeptide occupies 54-62 (LAPDAPPLE). Q63 carries the pyrrolidone carboxylic acid modification. Residues 66 to 74 (LAPAAPPLE) constitute a propeptide that is removed on maturation. Q75 carries the pyrrolidone carboxylic acid modification. A propeptide spanning residues 78–86 (LAPDAPPME) is cleaved from the precursor. Q87 carries the pyrrolidone carboxylic acid modification. Positions 90–98 (LAPDAPPME) are excised as a propeptide. Residue Q99 is modified to Pyrrolidone carboxylic acid. Positions 102-110 (LAPDAPPME) are excised as a propeptide. Q111 is modified (pyrrolidone carboxylic acid). The propeptide occupies 114 to 122 (LAPDAPPME). Q123 carries the pyrrolidone carboxylic acid modification. Residues 126 to 134 (LAPDAAPLE) constitute a propeptide that is removed on maturation. At Q135 the chain carries Pyrrolidone carboxylic acid. Positions 138–146 (LAPDAPPME) are excised as a propeptide. A Pyrrolidone carboxylic acid modification is found at Q147. Residues 150 to 158 (LAPDAPPME) constitute a propeptide that is removed on maturation. At Q159 the chain carries Pyrrolidone carboxylic acid. Residues 162-249 (QPQIPSLMEQ…KQASQKWGRL (88 aa)) constitute a propeptide that is removed on maturation. Residues 172 to 182 (RQLSSGGTTAL) are compositionally biased toward polar residues. Disordered stretches follow at residues 172 to 228 (RQLS…AAAT) and 252 to 279 (HDHD…GARR). The span at 198–209 (VVGGGGGGGGGS) shows a compositional bias: gly residues. Residues 210 to 227 (KAALALPKPPKAKGAAAA) are compositionally biased toward low complexity. A compositionally biased stretch (gly residues) spans 265 to 277 (SVGGGGGGGGGGA). The propeptide occupies 278 to 286 (RRLKGLAKK). Cysteines 292 and 308 form a disulfide.

It in the C-terminal section; belongs to the natriuretic peptide family. The protein in the central section; belongs to the pHpG family. Expressed by the venom gland.

Its subcellular location is the secreted. PEKW and poly-His-poly-Gly peptides may serve as metalloproteinase inhibitors during glandular storage. Their inhibition may be instantly disengaged, by dilution or physiochemical change, when venom is injected into tissue of the prey. Functionally, has a vasorelaxant activity in rat aortic strips and a diuretic potency in anesthetized rats. May act by activating natriuretic receptors (NPR1 and/or NPR2). This Echis ocellatus (Ocellated saw-scaled viper) protein is Snake venom metalloprotease inhibitor 02D01.